Here is a 476-residue protein sequence, read N- to C-terminus: Proline--tRNA ligase 2 (476 aa).

This sequence belongs to the class-II aminoacyl-tRNA synthetase family. ProS type 3 subfamily. In terms of assembly, homodimer.

It localises to the cytoplasm. The enzyme catalyses tRNA(Pro) + L-proline + ATP = L-prolyl-tRNA(Pro) + AMP + diphosphate. Catalyzes the attachment of proline to tRNA(Pro) in a two-step reaction: proline is first activated by ATP to form Pro-AMP and then transferred to the acceptor end of tRNA(Pro). This chain is Proline--tRNA ligase 2, found in Bacillus cereus (strain ATCC 14579 / DSM 31 / CCUG 7414 / JCM 2152 / NBRC 15305 / NCIMB 9373 / NCTC 2599 / NRRL B-3711).